Consider the following 456-residue polypeptide: Endoglucanase A (456 aa).

The signal sequence occupies residues 1–30 (MSRIRRFLATALAAATAGVGAIVTAIASAG). Residues 31-322 (PAHAYDSPFY…RAYELAMNAA (292 aa)) form a catalytic region. Aspartate 113 is a catalytic residue. Disulfide bonds link cysteine 114–cysteine 159 and cysteine 267–cysteine 302. The active-site Proton donor is the aspartate 151. A disordered region spans residues 255–280 (SRNGNGPLGSEWCDPPGRATGTWSTT). Aspartate 300 serves as the catalytic Nucleophile. The tract at residues 321-358 (AAPPTYSPSPTPSTPSPSPSQSDPGSPSPSPSQPPAGR) is disordered. Residues 323–355 (PPTYSPSPTPSTPSPSPSQSDPGSPSPSPSQPP) form a linker ('hinge') (Pro-Ser box) region. Positions 325-338 (TYSPSPTPSTPSPS) are enriched in pro residues. Residues 353–456 (QPPAGRACEA…LSSSITCSAS (104 aa)) enclose the CBM2 domain. Cysteines 360 and 453 form a disulfide.

Belongs to the glycosyl hydrolase 6 (cellulase B) family.

The enzyme catalyses Endohydrolysis of (1-&gt;4)-beta-D-glucosidic linkages in cellulose, lichenin and cereal beta-D-glucans.. In Thermobispora bispora (Microbispora bispora), this protein is Endoglucanase A (celA).